A 474-amino-acid polypeptide reads, in one-letter code: Pleckstrin homology domain-containing family S member 1 (474 aa).

One can recognise a PH domain in the interval Glu-20 to Gln-135. Disordered regions lie at residues Ile-232–Phe-251, Ser-272–Lys-321, and Arg-449–Glu-474. The span at Ser-238 to Asp-248 shows a compositional bias: polar residues. A compositionally biased stretch (basic and acidic residues) spans Arg-449–Pro-458.

The protein is Pleckstrin homology domain-containing family S member 1 of Mus musculus (Mouse).